The following is a 710-amino-acid chain: Aminopeptidase P2 (710 aa).

A chloroplast-targeting transit peptide spans 1-79 (MIPLTLSSPS…IRKAQTKVVV (79 aa)). A peptide-binding residues include Arg147 and His486. 3 residues coordinate Mn(2+): Asp506, Asp517, and His580. The a peptide site is built by His580, His589, and Glu614. Residues Glu614 and Glu628 each coordinate Mn(2+).

The protein belongs to the peptidase M24B family. In terms of assembly, homodimer. The cofactor is Mn(2+).

It is found in the plastid. The protein resides in the chloroplast. The enzyme catalyses Release of any N-terminal amino acid, including proline, that is linked to proline, even from a dipeptide or tripeptide.. Its function is as follows. Catalyzes the removal of a penultimate prolyl residue from the N-termini of peptides, such as Arg-Pro-Pro. The polypeptide is Aminopeptidase P2 (Arabidopsis thaliana (Mouse-ear cress)).